A 307-amino-acid chain; its full sequence is Branched-chain-amino-acid aminotransferase (307 aa).

Lys160 bears the N6-(pyridoxal phosphate)lysine mark.

Belongs to the class-IV pyridoxal-phosphate-dependent aminotransferase family. Requires pyridoxal 5'-phosphate as cofactor.

It catalyses the reaction L-leucine + 2-oxoglutarate = 4-methyl-2-oxopentanoate + L-glutamate. The catalysed reaction is L-isoleucine + 2-oxoglutarate = (S)-3-methyl-2-oxopentanoate + L-glutamate. The enzyme catalyses L-valine + 2-oxoglutarate = 3-methyl-2-oxobutanoate + L-glutamate. Its pathway is amino-acid biosynthesis; L-isoleucine biosynthesis; L-isoleucine from 2-oxobutanoate: step 4/4. It participates in amino-acid biosynthesis; L-leucine biosynthesis; L-leucine from 3-methyl-2-oxobutanoate: step 4/4. It functions in the pathway amino-acid biosynthesis; L-valine biosynthesis; L-valine from pyruvate: step 4/4. In terms of biological role, acts on leucine, isoleucine and valine. The chain is Branched-chain-amino-acid aminotransferase (ilvE) from Pseudomonas aeruginosa (strain ATCC 15692 / DSM 22644 / CIP 104116 / JCM 14847 / LMG 12228 / 1C / PRS 101 / PAO1).